A 167-amino-acid chain; its full sequence is MKIKKLLKNGLSLFLTFIVITSILDFVRRPVVPEEINKITLQDLQGNTFSLESLDQNKPTLLYFWGTWCGYCRYTSPAINSLAKEGYQVVSVALRSGNEADVNDYLSKNDYHFTTVNDPKGEFAERWQINVTPTIVLLSKGKMDLVTTGLTSYWGLKVRLFFAEFFG.

Residues 10–27 traverse the membrane as a helical segment; it reads GLSLFLTFIVITSILDFV. A Thioredoxin domain is found at 30-167; the sequence is PVVPEEINKI…VRLFFAEFFG (138 aa). A disulfide bridge links cysteine 69 with cysteine 72.

This sequence belongs to the thioredoxin family.

It localises to the cell membrane. This is Thioredoxin-like protein HI_1115 from Haemophilus influenzae (strain ATCC 51907 / DSM 11121 / KW20 / Rd).